A 172-amino-acid polypeptide reads, in one-letter code: uncharacterized protein (172 aa).

This is an uncharacterized protein from Microplitis demolitor bracovirus (isolate Webb) (MdBV).